The following is a 161-amino-acid chain: Large ribosomal subunit protein uL15 (161 aa).

Residues 1-43 form a disordered region; sequence MKLSDIADNAGARKKRMRVGRGIGSGKGKTSGRGGKGQTARSG. A compositionally biased stretch (gly residues) spans 21 to 37; sequence RGIGSGKGKTSGRGGKG.

The protein belongs to the universal ribosomal protein uL15 family. In terms of assembly, part of the 50S ribosomal subunit.

In terms of biological role, binds to the 23S rRNA. This chain is Large ribosomal subunit protein uL15, found in Bradyrhizobium sp. (strain BTAi1 / ATCC BAA-1182).